The primary structure comprises 279 residues: Phage-like element PBSX protein XepA (279 aa).

The protein to B.subtilis YqxG/YqdC.

In terms of biological role, not known; does not seem to be involved in host cell lysis. This is Phage-like element PBSX protein XepA (xepA) from Bacillus subtilis (strain 168).